We begin with the raw amino-acid sequence, 129 residues long: Small ribosomal subunit protein bS18c (129 aa).

The segment at Met-1–Lys-20 is disordered.

The protein belongs to the bacterial ribosomal protein bS18 family. Part of the 30S ribosomal subunit.

It localises to the plastid. The protein localises to the chloroplast. The polypeptide is Small ribosomal subunit protein bS18c (Stigeoclonium helveticum (Green alga)).